A 90-amino-acid polypeptide reads, in one-letter code: YcgL domain-containing protein YpsIP31758_2009 (90 aa).

In terms of domain architecture, YcgL spans 1–85 (MLCAIYRSPK…PPESLLKMHL (85 aa)).

In Yersinia pseudotuberculosis serotype O:1b (strain IP 31758), this protein is YcgL domain-containing protein YpsIP31758_2009.